Reading from the N-terminus, the 28-residue chain is Palustrin-1a (28 aa).

An intrachain disulfide couples C22 to C28.

In terms of tissue distribution, expressed by the skin glands.

Its subcellular location is the secreted. In terms of biological role, antimicrobial activity against Gram-negative bacterium E.coli. The polypeptide is Palustrin-1a (Lithobates palustris (Pickerel frog)).